The sequence spans 288 residues: ATP phosphoribosyltransferase (288 aa).

Belongs to the ATP phosphoribosyltransferase family. Long subfamily. The cofactor is Mg(2+).

It is found in the cytoplasm. The enzyme catalyses 1-(5-phospho-beta-D-ribosyl)-ATP + diphosphate = 5-phospho-alpha-D-ribose 1-diphosphate + ATP. Its pathway is amino-acid biosynthesis; L-histidine biosynthesis; L-histidine from 5-phospho-alpha-D-ribose 1-diphosphate: step 1/9. With respect to regulation, feedback inhibited by histidine. Catalyzes the condensation of ATP and 5-phosphoribose 1-diphosphate to form N'-(5'-phosphoribosyl)-ATP (PR-ATP). Has a crucial role in the pathway because the rate of histidine biosynthesis seems to be controlled primarily by regulation of HisG enzymatic activity. The protein is ATP phosphoribosyltransferase of Methanococcus maripaludis (strain C7 / ATCC BAA-1331).